A 603-amino-acid chain; its full sequence is Adenine deaminase (603 aa).

The protein belongs to the metallo-dependent hydrolases superfamily. Adenine deaminase family. Homodimer. It depends on Mn(2+) as a cofactor.

The enzyme catalyses adenine + H2O + H(+) = hypoxanthine + NH4(+). This is Adenine deaminase from Klebsiella pneumoniae subsp. pneumoniae (strain ATCC 700721 / MGH 78578).